The sequence spans 161 residues: Alpha-crystallin A chain (161 aa).

The residue at position 1 (methionine 1) is an N-acetylmethionine. Residues 1–53 (MDVTIQHPWFKRALGPFYHNRLFDQFFGEGLFEYDLLPFQSLFRTVLDSGISE) form a required for complex formation with BFSP1 and BFSP2 region. Deamidated glutamine; partial occurs at positions 6 and 40. The sHSP domain maps to 41–150 (SLFRTVLDSG…SHSERAIPVS (110 aa)). Position 87 is an N6-acetyllysine (lysine 87). Residue histidine 88 participates in Zn(2+) binding. Asparagine 89 is modified (deamidated asparagine; partial). Residues glutamate 90 and histidine 95 each coordinate Zn(2+). Residue serine 110 is modified to Phosphoserine. A Deamidated asparagine; partial modification is found at asparagine 111. The cysteines at positions 119 and 130 are disulfide-linked. The residue at position 135 (glutamine 135) is a Deamidated glutamine; partial. Residues 135 to 161 (QSGMDASHSERAIPVSREEKASSAPNS) form a disordered region. Residues 141 to 155 (SHSERAIPVSREEKA) show a composition bias toward basic and acidic residues. Histidine 142 lines the Zn(2+) pocket. O-linked (GlcNAc) serine glycosylation is present at serine 150.

The protein belongs to the small heat shock protein (HSP20) family. Heteromer composed of three CRYAA and one CRYAB subunits. Inter-subunit bridging via zinc ions enhances stability, which is crucial as there is no protein turn over in the lens. Can also form homodimers and homotetramers (dimers of dimers) which serve as the building blocks of homooligomers. Within homooligomers, the zinc-binding motif is created from residues of 3 different molecules. His-88 and Glu-90 from one molecule are ligands of the zinc ion, and His-95 and His-142 residues from additional molecules complete the site with tetrahedral coordination geometry. Part of a complex required for lens intermediate filament formation composed of BFSP1, BFSP2 and CRYAA. In terms of processing, undergoes age-dependent proteolytical cleavage at the C-terminus.

Its subcellular location is the cytoplasm. The protein localises to the nucleus. Its function is as follows. Contributes to the transparency and refractive index of the lens. In its oxidized form (absence of intramolecular disulfide bond), acts as a chaperone, preventing aggregation of various proteins under a wide range of stress conditions. Required for the correct formation of lens intermediate filaments as part of a complex composed of BFSP1, BFSP2 and CRYAA. The sequence is that of Alpha-crystallin A chain (CRYAA) from Trichechus inunguis (Amazon manatee).